Here is a 111-residue protein sequence, read N- to C-terminus: Tubulin beta chain (111 aa).

Residues 82-111 (SEYQQYQDATAEDEGEFDEEEAEGEGQEYA) form a disordered region. Acidic residues predominate over residues 91–111 (TAEDEGEFDEEEAEGEGQEYA).

This sequence belongs to the tubulin family. As to quaternary structure, dimer of alpha and beta chains. A typical microtubule is a hollow water-filled tube with an outer diameter of 25 nm and an inner diameter of 15 nM. Alpha-beta heterodimers associate head-to-tail to form protofilaments running lengthwise along the microtubule wall with the beta-tubulin subunit facing the microtubule plus end conferring a structural polarity. Microtubules usually have 13 protofilaments but different protofilament numbers can be found in some organisms and specialized cells. It depends on Mg(2+) as a cofactor.

The protein localises to the cytoplasm. It is found in the cytoskeleton. Its function is as follows. Tubulin is the major constituent of microtubules, a cylinder consisting of laterally associated linear protofilaments composed of alpha- and beta-tubulin heterodimers. Microtubules grow by the addition of GTP-tubulin dimers to the microtubule end, where a stabilizing cap forms. Below the cap, tubulin dimers are in GDP-bound state, owing to GTPase activity of alpha-tubulin. The polypeptide is Tubulin beta chain (Lymnaea stagnalis (Great pond snail)).